We begin with the raw amino-acid sequence, 303 residues long: D-alanine--D-alanine ligase (303 aa).

The ATP-grasp domain occupies 104–300 (KLMWQAVGLP…FEKLVERVLE (197 aa)). 132 to 187 (IAKLGLPVFVKPSSEGSSVGVTKVKTVEQLLPAVEEALKFDSIVLVEAFLAGKEYS) is a binding site for ATP. 3 residues coordinate Mg(2+): Asp-254, Glu-267, and Asn-269.

Belongs to the D-alanine--D-alanine ligase family. Mg(2+) is required as a cofactor. Requires Mn(2+) as cofactor.

It is found in the cytoplasm. The enzyme catalyses 2 D-alanine + ATP = D-alanyl-D-alanine + ADP + phosphate + H(+). The protein operates within cell wall biogenesis; peptidoglycan biosynthesis. In terms of biological role, cell wall formation. The polypeptide is D-alanine--D-alanine ligase (Actinobacillus pleuropneumoniae serotype 5b (strain L20)).